Here is a 387-residue protein sequence, read N- to C-terminus: Succinate--CoA ligase [ADP-forming] subunit beta (387 aa).

The ATP-grasp domain occupies 9 to 244 (KHILSKFGVN…YDEEIKEEIE (236 aa)). Residues Lys46, 53–55 (GRG), Glu99, Cys102, and Glu107 contribute to the ATP site. 2 residues coordinate Mg(2+): Asn199 and Asp213. Residues Asn264 and 321–323 (GIM) contribute to the substrate site.

Belongs to the succinate/malate CoA ligase beta subunit family. Heterotetramer of two alpha and two beta subunits. Mg(2+) serves as cofactor.

It catalyses the reaction succinate + ATP + CoA = succinyl-CoA + ADP + phosphate. It carries out the reaction GTP + succinate + CoA = succinyl-CoA + GDP + phosphate. It participates in carbohydrate metabolism; tricarboxylic acid cycle; succinate from succinyl-CoA (ligase route): step 1/1. Its function is as follows. Succinyl-CoA synthetase functions in the citric acid cycle (TCA), coupling the hydrolysis of succinyl-CoA to the synthesis of either ATP or GTP and thus represents the only step of substrate-level phosphorylation in the TCA. The beta subunit provides nucleotide specificity of the enzyme and binds the substrate succinate, while the binding sites for coenzyme A and phosphate are found in the alpha subunit. This Ehrlichia chaffeensis (strain ATCC CRL-10679 / Arkansas) protein is Succinate--CoA ligase [ADP-forming] subunit beta.